The primary structure comprises 320 residues: Ferrochelatase (320 aa).

The Fe cation site is built by His194 and Glu275.

Belongs to the ferrochelatase family.

The protein resides in the cytoplasm. It carries out the reaction heme b + 2 H(+) = protoporphyrin IX + Fe(2+). It participates in porphyrin-containing compound metabolism; protoheme biosynthesis; protoheme from protoporphyrin-IX: step 1/1. Its function is as follows. Catalyzes the ferrous insertion into protoporphyrin IX. This chain is Ferrochelatase, found in Vibrio atlanticus (strain LGP32) (Vibrio splendidus (strain Mel32)).